The sequence spans 1002 residues: BTB/POZ domain-containing protein At1g04390 (1002 aa).

BTB domains follow at residues 680 to 758 and 808 to 889; these read SDMR…EVES and SDVI…PKPP.

The protein operates within protein modification; protein ubiquitination. Its function is as follows. May act as a substrate-specific adapter of an E3 ubiquitin-protein ligase complex (CUL3-RBX1-BTB) which mediates the ubiquitination and subsequent proteasomal degradation of target proteins. In Arabidopsis thaliana (Mouse-ear cress), this protein is BTB/POZ domain-containing protein At1g04390.